The following is a 307-amino-acid chain: Serine/threonine-protein phosphatase 4 catalytic subunit (307 aa).

Ala-2 is subject to N-acetylalanine. Residues Asp-54, His-56, Asp-82, and Asn-114 each contribute to the Mn(2+) site. Catalysis depends on His-115, which acts as the Proton donor. Mn(2+) contacts are provided by His-164 and His-238. Leu-307 carries the post-translational modification Leucine methyl ester.

It belongs to the PPP phosphatase family. PP-4 (PP-X) subfamily. In terms of assembly, serine/threonine-protein phosphatase 4 (PP4) occurs in different assemblies of the catalytic and one or more regulatory subunits. Component of the PP4 complexes PPP4C-PPP4R1, PPP4C-PPP4R2, PPP4C-PPP4R2-PPP4R3A, PPP4C-PPP4R2-PPP4R3B and PPP4C-PPP4R4. The PPP4C-PPP4R2 complex appears to be a tetramer composed of 2 molecules of PPP4C and 2 molecules of PPP4R2. Interacts with REL, NFKB1/p50 and RELA. Interacts with SMN1 and GEMIN4. Interacts with IRS4 (phosphorylated). Interacts with SMEK1/PPP4R3A; the interaction requires PP4R2. Interacts with HDAC3. The cofactor is Mn(2+). In terms of processing, methylation at the C-terminal Leu-307 is critical for interactions with regulatory subunits and functions in DNA repair.

The protein localises to the cytoplasm. The protein resides in the nucleus. Its subcellular location is the cytoskeleton. It localises to the microtubule organizing center. It is found in the centrosome. It carries out the reaction O-phospho-L-seryl-[protein] + H2O = L-seryl-[protein] + phosphate. The catalysed reaction is O-phospho-L-threonyl-[protein] + H2O = L-threonyl-[protein] + phosphate. Functionally, protein phosphatase that is involved in many processes such as microtubule organization at centrosomes, maturation of spliceosomal snRNPs, apoptosis, DNA repair, tumor necrosis factor (TNF)-alpha signaling, activation of c-Jun N-terminal kinase MAPK8, regulation of histone acetylation, DNA damage checkpoint signaling, NF-kappa-B activation and cell migration. The PPP4C-PPP4R1 PP4 complex may play a role in dephosphorylation and regulation of HDAC3. The PPP4C-PPP4R2-PPP4R3A PP4 complex specifically dephosphorylates H2AX phosphorylated on Ser-140 (gamma-H2AX) generated during DNA replication and required for DNA DSB repair. Dephosphorylates NDEL1 at CDK1 phosphorylation sites and negatively regulates CDK1 activity in interphase. In response to DNA damage, catalyzes RPA2 dephosphorylation, an essential step for DNA repair since it allows the efficient RPA2-mediated recruitment of RAD51 to chromatin. This chain is Serine/threonine-protein phosphatase 4 catalytic subunit (Ppp4c), found in Rattus norvegicus (Rat).